Here is a 378-residue protein sequence, read N- to C-terminus: Chaperone protein DnaJ (378 aa).

Positions 3–67 (DFYDTLGVNR…EKRARYDQFG (65 aa)) constitute a J domain. The CR-type zinc-finger motif lies at 132–214 (GQEREIKIPH…CGGQGVKQVR (83 aa)). Zn(2+)-binding residues include cysteine 145, cysteine 148, cysteine 162, cysteine 165, cysteine 188, cysteine 191, cysteine 202, and cysteine 205. CXXCXGXG motif repeat units follow at residues 145-152 (CDVCRGTG), 162-169 (CSTCGGAG), 188-195 (CPTCSGSG), and 202-209 (CQSCGGQG).

The protein belongs to the DnaJ family. As to quaternary structure, homodimer. The cofactor is Zn(2+).

It is found in the cytoplasm. Participates actively in the response to hyperosmotic and heat shock by preventing the aggregation of stress-denatured proteins and by disaggregating proteins, also in an autonomous, DnaK-independent fashion. Unfolded proteins bind initially to DnaJ; upon interaction with the DnaJ-bound protein, DnaK hydrolyzes its bound ATP, resulting in the formation of a stable complex. GrpE releases ADP from DnaK; ATP binding to DnaK triggers the release of the substrate protein, thus completing the reaction cycle. Several rounds of ATP-dependent interactions between DnaJ, DnaK and GrpE are required for fully efficient folding. Also involved, together with DnaK and GrpE, in the DNA replication of plasmids through activation of initiation proteins. This Prochlorococcus marinus (strain SARG / CCMP1375 / SS120) protein is Chaperone protein DnaJ.